Here is a 415-residue protein sequence, read N- to C-terminus: PRKCA-binding protein (415 aa).

The PDZ domain maps to 22 to 105 (KVTLQKDAQN…EVTIHYNKLQ (84 aa)). The Zn(2+) site is built by cysteine 44 and cysteine 46. A Phosphothreonine modification is found at threonine 82. The AH domain occupies 144–357 (LCNDGLVKRL…CYAVLRDADV (214 aa)). Positions 376-415 (EEFTDGEEEEEEEDTAAGEPSRDTRGAAGPLDKGGSWCDS) are disordered. Residues 377 to 391 (EFTDGEEEEEEEDTA) are compositionally biased toward acidic residues. A lipid anchor (S-palmitoyl cysteine; by DHHC8) is attached at cysteine 413.

As to quaternary structure, monomer and homodimer. Interacts with CXADR. Interacts presynaptically with the glutamate receptors GRIA2, GRIA3, GRIK3, isoform 3 of GRIA4, isoform A of GRM4, GRM7 and GRM8; with NAPA and NAPB; and with BTG2. The interaction with NAPA and NAPB disrupts the interaction with GRIA2, conducting to the internalization of GRIA2. Interacts with PRKCA; with the amine transporters SLC6A2 and SLC6A3; with the channels ASIC1 and ASIC2; with the GTP-binding proteins ARF1 and ARF3; with the ephrin receptor tyrosine kinases EPHA7, EPHB1 and EPHB2; with ERBB2 and through its PDZ domain with the C-terminal tail of PRLHR. Interacts with UNC5A. Interacts (via AH domain) with NCS1/FREQ; in a calcium-dependent manner. Interacts with F-actin and associates with the ARP2/3 complex. Interacts (via PDZ domain) with ARF1 (activated); the interaction blocks Arp2/3 complex inhibition. Interacts with SORCS3. Post-translationally, phosphorylation at Thr-82 appears to inhibit the interaction with AMPA receptors. Palmitoylation on Cys-413 is essential for long-term synaptic depression (LTD).

The protein resides in the cytoplasm. It is found in the perinuclear region. Its subcellular location is the membrane. The protein localises to the postsynaptic density. It localises to the synapse. The protein resides in the synaptosome. It is found in the cytoskeleton. Functionally, probable adapter protein that bind to and organize the subcellular localization of a variety of membrane proteins containing some PDZ recognition sequence. Involved in the clustering of various receptors, possibly by acting at the receptor internalization level. Plays a role in synaptic plasticity by regulating the trafficking and internalization of AMPA receptors. May be regulated upon PRKCA activation. May regulate ASIC1/ASIC3 channel. Regulates actin polymerization by inhibiting the actin-nucleating activity of the Arp2/3 complex; the function is competitive with nucleation promoting factors and is linked to neuronal morphology regulation and AMPA receptor (AMPAR) endocytosis. Via interaction with the Arp2/3 complex involved in regulation of synaptic plasicity of excitatory synapses and required for spine shrinkage during long-term depression (LTD). Involved in regulation of astrocyte morphology, antagonistic to Arp2/3 complex activator WASL/N-WASP function. The sequence is that of PRKCA-binding protein (PICK1) from Macaca fascicularis (Crab-eating macaque).